The primary structure comprises 304 residues: Putative S-adenosyl-L-methionine-dependent methyltransferase MSMEG_1481/MSMEI_1445 (304 aa).

S-adenosyl-L-methionine-binding positions include Asp127 and 156 to 157 (DL).

Belongs to the UPF0677 family.

Its function is as follows. Exhibits S-adenosyl-L-methionine-dependent methyltransferase activity. The protein is Putative S-adenosyl-L-methionine-dependent methyltransferase MSMEG_1481/MSMEI_1445 of Mycolicibacterium smegmatis (strain ATCC 700084 / mc(2)155) (Mycobacterium smegmatis).